Consider the following 139-residue polypeptide: Self-incompatibility protein S1 (139 aa).

Positions 1 to 19 (MNIFYVIVLLSFFLSKSSG) are cleaved as a signal peptide. An N-linked (GlcNAc...) asparagine glycan is attached at asparagine 51.

The protein belongs to the plant self-incompatibility (S1) protein family. In terms of processing, glycosylated (S1b) and unglocosylated (S1a) forms coexist. In terms of tissue distribution, accumulates in the stigma (at protein level).

Its subcellular location is the secreted. Its function is as follows. Exhibits specific pollen self-inhibitory activity thus preventing self-fertilization. This Papaver rhoeas (Common poppy) protein is Self-incompatibility protein S1.